We begin with the raw amino-acid sequence, 421 residues long: CinA-like protein (421 aa).

The protein belongs to the CinA family.

This Myxococcus xanthus (strain DK1622) protein is CinA-like protein.